We begin with the raw amino-acid sequence, 59 residues long: Large ribosomal subunit protein uL30 (59 aa).

Belongs to the universal ribosomal protein uL30 family. In terms of assembly, part of the 50S ribosomal subunit.

In Proteus mirabilis (strain HI4320), this protein is Large ribosomal subunit protein uL30.